A 413-amino-acid polypeptide reads, in one-letter code: MDHLKRQDEKVFAAIEAELGRQRSKIELIASENFVSEAVMEAQGSVLTNKYAEGYPGKRYYGGCEHVDVVEDIARDRVKEIFGAEHVNVQPHSGAQANMAVYFTILEQGDTVLGMNLSHGGHLTHGSPVNFSGVQYNFVEYGVDAESHRINYDDVLAKAKEHKPKLIVAGASAYPRVIDFKRFREIADEVGAYLMVDMAHIAGLVAAGLHPNPVPHAHFVTTTTHKTLRGPRGGMILCEEQFAKQIDKSIFPGIQGGPLMHVIAAKAVAFGEALQDDFKTYAQNIINNANRLAEGLQKEGLTLVSGGTDNHLILIDVRNLEITGKVAEHVLDEVGITVNKNTIPFETASPFVTSGVRIGTAAVTSRGFGLEEMDEIASLIAYTLKNHENEAALEEARKRVEALTSKFPMYTDL.

Residues Leu-117 and 121-123 contribute to the (6S)-5,6,7,8-tetrahydrofolate site; that span reads GHL. Residue Lys-226 is modified to N6-(pyridoxal phosphate)lysine. (6S)-5,6,7,8-tetrahydrofolate is bound by residues Glu-239 and 349–351; that span reads SPF.

The protein belongs to the SHMT family. In terms of assembly, homodimer. Pyridoxal 5'-phosphate serves as cofactor.

The protein localises to the cytoplasm. The catalysed reaction is (6R)-5,10-methylene-5,6,7,8-tetrahydrofolate + glycine + H2O = (6S)-5,6,7,8-tetrahydrofolate + L-serine. It functions in the pathway one-carbon metabolism; tetrahydrofolate interconversion. It participates in amino-acid biosynthesis; glycine biosynthesis; glycine from L-serine: step 1/1. Its function is as follows. Catalyzes the reversible interconversion of serine and glycine with tetrahydrofolate (THF) serving as the one-carbon carrier. This reaction serves as the major source of one-carbon groups required for the biosynthesis of purines, thymidylate, methionine, and other important biomolecules. Also exhibits THF-independent aldolase activity toward beta-hydroxyamino acids, producing glycine and aldehydes, via a retro-aldol mechanism. The sequence is that of Serine hydroxymethyltransferase from Bacillus cereus (strain ATCC 10987 / NRS 248).